A 349-amino-acid polypeptide reads, in one-letter code: Hydroxymethylglutaryl-CoA synthase (349 aa).

D30 contacts (3S)-3-hydroxy-3-methylglutaryl-CoA. E82 acts as the Proton donor/acceptor in catalysis. C114 serves as a coordination point for (3S)-3-hydroxy-3-methylglutaryl-CoA. Residue C114 is the Acyl-thioester intermediate of the active site. R203 contributes to the CoA binding site. Residues T205 and H238 each coordinate (3S)-3-hydroxy-3-methylglutaryl-CoA. H238 serves as the catalytic Proton donor/acceptor. K243 contacts CoA. K247, N270, and S300 together coordinate (3S)-3-hydroxy-3-methylglutaryl-CoA.

It belongs to the thiolase-like superfamily. Archaeal HMG-CoA synthase family. Interacts with acetoacetyl-CoA thiolase that catalyzes the precedent step in the pathway and with a DUF35 protein. The acetoacetyl-CoA thiolase/HMG-CoA synthase complex channels the intermediate via a fused CoA-binding site, which allows for efficient coupling of the endergonic thiolase reaction with the exergonic HMGCS reaction.

It carries out the reaction acetoacetyl-CoA + acetyl-CoA + H2O = (3S)-3-hydroxy-3-methylglutaryl-CoA + CoA + H(+). It functions in the pathway metabolic intermediate biosynthesis; (R)-mevalonate biosynthesis; (R)-mevalonate from acetyl-CoA: step 2/3. Its function is as follows. Catalyzes the condensation of acetyl-CoA with acetoacetyl-CoA to form 3-hydroxy-3-methylglutaryl-CoA (HMG-CoA). Functions in the mevalonate (MVA) pathway leading to isopentenyl diphosphate (IPP), a key precursor for the biosynthesis of isoprenoid compounds that are building blocks of archaeal membrane lipids. This is Hydroxymethylglutaryl-CoA synthase from Methanothermococcus thermolithotrophicus (Methanococcus thermolithotrophicus).